A 199-amino-acid polypeptide reads, in one-letter code: NAD(P)H dehydrogenase (quinone) (199 aa).

One can recognise a Flavodoxin-like domain in the interval Met-4 to Val-190. FMN contacts are provided by residues Ser-10–Met-15 and Thr-78–Tyr-80. An NAD(+)-binding site is contributed by Tyr-12. Trp-98 lines the substrate pocket. Residues Ser-113–Gly-119 and His-134 each bind FMN. The interval Tyr-161–Asp-181 is disordered. Positions Met-163–Ala-177 are enriched in polar residues.

This sequence belongs to the WrbA family. The cofactor is FMN.

The enzyme catalyses a quinone + NADH + H(+) = a quinol + NAD(+). The catalysed reaction is a quinone + NADPH + H(+) = a quinol + NADP(+). This is NAD(P)H dehydrogenase (quinone) from Brucella canis (strain ATCC 23365 / NCTC 10854 / RM-666).